Here is a 761-residue protein sequence, read N- to C-terminus: Membrane protein of ER body-like protein (761 aa).

2 disordered regions span residues 1–85 (MGSA…GEHT) and 120–162 (GSES…RSRE). Over residues 22–31 (EVEEDDEQIV) the composition is skewed to acidic residues. Over residues 48–65 (VDSSTITNTSSSSSSSFS) the composition is skewed to low complexity. Residues 74–85 (PDFHSNGDGEHT) are compositionally biased toward basic and acidic residues. Polar residues predominate over residues 136–154 (TADLNGEQTQLEPENGSTS). Positions 186-206 (IEEEVDFEDVEYHDVENMMDK) form a coiled coil. 2 disordered regions span residues 338-374 (SSSV…TGSA) and 416-448 (QTQQ…PSHG). Polar residues predominate over residues 416-432 (QTQQKIDNDDSSTADGN). Helical transmembrane passes span 549-569 (IVYG…SAAG), 573-593 (SMLN…ILII), 640-660 (VAIL…YFSF), 670-690 (VASV…AKAH), and 702-722 (ILYY…VGNF).

It belongs to the CCC1 family.

The protein resides in the endoplasmic reticulum membrane. In terms of biological role, not essential for the accumulation of ER body components, including PYK10. This Arabidopsis thaliana (Mouse-ear cress) protein is Membrane protein of ER body-like protein (MEBL).